Here is a 376-residue protein sequence, read N- to C-terminus: Carbamoyl phosphate synthase small chain (376 aa).

Residues 1-183 (MENILLNKAL…IYKKKYIEKN (183 aa)) are CPSase. 3 residues coordinate L-glutamine: Ser51, Gly235, and Gly237. One can recognise a Glutamine amidotransferase type-1 domain in the interval 187 to 374 (NIVAYDFGIK…INLVKDYRLN (188 aa)). Cys263 acts as the Nucleophile in catalysis. Residues Leu264, Gln267, Asn305, and Phe308 each coordinate L-glutamine. Active-site residues include His347 and Glu349.

It belongs to the CarA family. In terms of assembly, composed of two chains; the small (or glutamine) chain promotes the hydrolysis of glutamine to ammonia, which is used by the large (or ammonia) chain to synthesize carbamoyl phosphate. Tetramer of heterodimers (alpha,beta)4.

It catalyses the reaction hydrogencarbonate + L-glutamine + 2 ATP + H2O = carbamoyl phosphate + L-glutamate + 2 ADP + phosphate + 2 H(+). The catalysed reaction is L-glutamine + H2O = L-glutamate + NH4(+). The protein operates within amino-acid biosynthesis; L-arginine biosynthesis; carbamoyl phosphate from bicarbonate: step 1/1. It participates in pyrimidine metabolism; UMP biosynthesis via de novo pathway; (S)-dihydroorotate from bicarbonate: step 1/3. Functionally, small subunit of the glutamine-dependent carbamoyl phosphate synthetase (CPSase). CPSase catalyzes the formation of carbamoyl phosphate from the ammonia moiety of glutamine, carbonate, and phosphate donated by ATP, constituting the first step of 2 biosynthetic pathways, one leading to arginine and/or urea and the other to pyrimidine nucleotides. The small subunit (glutamine amidotransferase) binds and cleaves glutamine to supply the large subunit with the substrate ammonia. The protein is Carbamoyl phosphate synthase small chain of Wigglesworthia glossinidia brevipalpis.